The sequence spans 349 residues: S-adenosylmethionine:tRNA ribosyltransferase-isomerase (349 aa).

Belongs to the QueA family. As to quaternary structure, monomer.

It is found in the cytoplasm. The catalysed reaction is 7-aminomethyl-7-carbaguanosine(34) in tRNA + S-adenosyl-L-methionine = epoxyqueuosine(34) in tRNA + adenine + L-methionine + 2 H(+). It functions in the pathway tRNA modification; tRNA-queuosine biosynthesis. Its function is as follows. Transfers and isomerizes the ribose moiety from AdoMet to the 7-aminomethyl group of 7-deazaguanine (preQ1-tRNA) to give epoxyqueuosine (oQ-tRNA). This is S-adenosylmethionine:tRNA ribosyltransferase-isomerase from Ruegeria sp. (strain TM1040) (Silicibacter sp.).